We begin with the raw amino-acid sequence, 304 residues long: GTPase Era (304 aa).

Positions 11 to 186 constitute an Era-type G domain; that stretch reads YCGFIAIVGR…LRKGVHHFPE (176 aa). The segment at 19–26 is G1; the sequence is GRPNVGKS. 19 to 26 serves as a coordination point for GTP; it reads GRPNVGKS. Residues 45–49 form a G2 region; sequence QTTRH. Positions 66-69 are G3; sequence DTPG. Residues 66 to 70 and 128 to 131 contribute to the GTP site; these read DTPGL and NKVD. Residues 128–131 are G4; the sequence is NKVD. A G5 region spans residues 158 to 160; it reads ISA. The 78-residue stretch at 210–287 folds into the KH type-2 domain; it reads TGEELPYSVT…HLELWVKVKS (78 aa).

The protein belongs to the TRAFAC class TrmE-Era-EngA-EngB-Septin-like GTPase superfamily. Era GTPase family. Monomer.

It localises to the cytoplasm. Its subcellular location is the cell inner membrane. Its function is as follows. An essential GTPase that binds both GDP and GTP, with rapid nucleotide exchange. Plays a role in 16S rRNA processing and 30S ribosomal subunit biogenesis and possibly also in cell cycle regulation and energy metabolism. The polypeptide is GTPase Era (Histophilus somni (strain 2336) (Haemophilus somnus)).